Reading from the N-terminus, the 154-residue chain is Terephthalate 1,2-dioxygenase, terminal oxygenase component subunit beta 2 (154 aa).

Belongs to the bacterial ring-hydroxylating dioxygenase beta subunit family. Heterotetramer composed of 2 alpha (TphA2I and TphA2II) and 2 beta (TphA3I and TphA3II) subunits. Part of a multicomponent enzyme system composed of a reductase (TphA1I or TphA1II) and a two-subunit oxygenase component (TphA2I or TphA2II and TphA3I or TphA3II). Requires Fe cation as cofactor.

The catalysed reaction is terephthalate + NADH + O2 + H(+) = (3S,4R)-3,4-dihydroxycyclohexa-1,5-diene-1,4-dicarboxylate + NAD(+). With respect to regulation, inhibited by EDTA. Component of the terephthalate 1,2-dioxygenase multicomponent enzyme system which catalyzes the dioxygenation of terephthalate (TER/TPA) to 1,2-dihydroxy-3,5-cyclohexadiene-1,4-dicarboxylic acid (DCD). It can also use 2,5-dicarboxypyridine (PDC) and 1,4-napthalenedicarboxylic acid (NDC) as substrates, and preferentially uses NADPH which is the physiological electron donor. The sequence is that of Terephthalate 1,2-dioxygenase, terminal oxygenase component subunit beta 2 (tphA3II) from Comamonas sp.